Consider the following 556-residue polypeptide: Interleukin-1 receptor-like 1 (556 aa).

The first 18 residues, 1 to 18 (MGFWILAILTILMYSTAA), serve as a signal peptide directing secretion. Ig-like C2-type domains are found at residues 19-103 (KFSK…ANVT) and 114-197 (PDYL…VTAT). At 19–328 (KFSKQSWGLE…SRKNPIDHHS (310 aa)) the chain is on the extracellular side. A disulfide bridge connects residues C36 and C87. Residues N54, N95, N101, N140, and N191 are each glycosylated (N-linked (GlcNAc...) asparagine). 2 cysteine pairs are disulfide-bonded: C111–C151 and C133–C181. Positions 198–211 (RSFTVKDEQGFSLF) are flexible linker. The 108-residue stretch at 212–319 (PVIGAPAQNE…GLRRHTVRLS (108 aa)) folds into the Ig-like C2-type 3 domain. N232, N254, and N273 each carry an N-linked (GlcNAc...) asparagine glycan. 2 cysteine pairs are disulfide-bonded: C235–C303 and C238–C282. A Glycyl lysine isopeptide (Lys-Gly) (interchain with G-Cter in ubiquitin) cross-link involves residue K321. Residues 329–349 (IYCIIAVCSVFLMLINVLVII) form a helical membrane-spanning segment. The Cytoplasmic segment spans residues 350-556 (LKMFWIEATL…SLTPLAAQKQ (207 aa)). Positions 375 to 535 (KLYDAYVVYP…KFWKHVRYQM (161 aa)) constitute a TIR domain. E461 is an active-site residue.

It belongs to the interleukin-1 receptor family. In terms of assembly, interacts with MYD88, IRAK1, IRAK4, and TRAF6. Bound to its ligand IL-33, interacts with IL1RAP to form the minimal interleukin-33 signaling complex with a 1:1:1 stoichiometry. Interacts with KIT (bound to KITLG/SCF). A mast cell-specific KITLG/SCF-induced interleukin-33 signaling complex contains IL1RL1, IL1RAP, KIT and MYD88. Interacts with TMED1. In terms of processing, ubiquitinated at Lys-321 in a FBXL19-mediated manner; leading to proteasomal degradation. Ubiquitination by TRAF6 via 'Lys-27'-linked polyubiquitination and deubiquitination by USP38 serves as a critical regulatory mechanism for fine-tuning IL1RL1-mediated inflammatory response. In terms of tissue distribution, highly expressed in kidney, lung, placenta, stomach, skeletal muscle, colon and small intestine. Isoform A is prevalently expressed in the lung, testis, placenta, stomach and colon. Isoform B is more abundant in the brain, kidney and the liver. Isoform C is not detected in brain, heart, liver, kidney and skeletal muscle. Expressed on T-cells in fibrotic liver; at protein level. Overexpressed in fibrotic and cirrhotic liver.

Its subcellular location is the cell membrane. The protein localises to the secreted. The catalysed reaction is NAD(+) + H2O = ADP-D-ribose + nicotinamide + H(+). Receptor for interleukin-33 (IL-33) which plays crucial roles in innate and adaptive immunity, contributing to tissue homeostasis and responses to environmental stresses together with coreceptor IL1RAP. Its stimulation recruits MYD88, IRAK1, IRAK4, and TRAF6, followed by phosphorylation of MAPK3/ERK1 and/or MAPK1/ERK2, MAPK14, and MAPK8. Possibly involved in helper T-cell function. Upon tissue injury, induces UCP2-dependent mitochondrial rewiring that attenuates the generation of reactive oxygen species and preserves the integrity of Krebs cycle required for persistent production of itaconate and subsequent GATA3-dependent differentiation of inflammation-resolving alternatively activated macrophages. Its function is as follows. Inhibits IL-33 signaling. The protein is Interleukin-1 receptor-like 1 (IL1RL1) of Homo sapiens (Human).